A 561-amino-acid polypeptide reads, in one-letter code: Interleukin-1 receptor-like 2 (561 aa).

The first 21 residues, 1–21, serve as a signal peptide directing secretion; the sequence is MGMPPLLFCWVSFVLPLFVAA. Ig-like C2-type domains follow at residues 22-113, 128-215, and 225-321; these read GNCT…INLT, SINS…VRNY, and SGGR…TCHA. Residues 22-338 lie on the Extracellular side of the membrane; that stretch reads GNCTDVYMHH…ILKRPAPDFR (317 aa). 5 N-linked (GlcNAc...) asparagine glycosylation sites follow: Asn23, Asn43, Asn55, Asn111, and Asn130. Cys44 and Cys97 form a disulfide bridge. A disulfide bridge connects residues Cys149 and Cys199. Residues Asn231, Asn237, Asn253, Asn269, Asn290, and Asn302 are each glycosylated (N-linked (GlcNAc...) asparagine). Residues Cys252 and Cys319 are joined by a disulfide bond. A helical transmembrane segment spans residues 339–358; it reads AYLIGGLMAFLLLAVSILYI. Residues 359–561 are Cytoplasmic-facing; it reads YNTFKVDIVL…LLGHTPRIPG (203 aa). Residues 384-539 enclose the TIR domain; sequence KLYDAYVLYP…KFWKKVRYHM (156 aa). Glu470 is a catalytic residue.

Belongs to the interleukin-1 receptor family. Interacts with IL1RAP; the association is enhanced by IL36B indicative for an functional signaling complex and inhibited by IL36RN. In terms of tissue distribution, predominant expression in the lung and epididymis, with lower expression in cerebral cortex and testis. Expression in the brain is non-neuronal and associated with the cerebral vasculature. Not detected in any cell line tested.

The protein resides in the membrane. It catalyses the reaction NAD(+) + H2O = ADP-D-ribose + nicotinamide + H(+). Functionally, receptor for interleukin-36 (IL36A, IL36B and IL36G). After binding to interleukin-36 associates with the coreceptor IL1RAP to form the interleukin-36 receptor complex which mediates interleukin-36-dependent activation of NF-kappa-B, MAPK and other pathways. The IL-36 signaling system is thought to be present in epithelial barriers and to take part in local inflammatory response; it is similar to the IL-1 system. Seems to be involved in skin inflammatory response by induction of the IL-23/IL-17/IL-22 pathway. Receptor for the interleukin IL36G. Binding to the agonist leads to the activation of NF-kappa-B. The chain is Interleukin-1 receptor-like 2 (Il1rl2) from Rattus norvegicus (Rat).